Here is a 277-residue protein sequence, read N- to C-terminus: Thiamine thiazole synthase (277 aa).

Residues serine 36, glycine 63, valine 126, and 152–154 (HVD) contribute to the NAD(+) site. Residues aspartate 154 and histidine 169 each contribute to the Fe cation site. NAD(+) is bound at residue methionine 230. Residue arginine 240 coordinates glycine.

This sequence belongs to the THI4 family. As to quaternary structure, homooctamer; tetramer of dimers. Fe(2+) serves as cofactor.

The enzyme catalyses hydrogen sulfide + glycine + NAD(+) = ADP-5-ethyl-4-methylthiazole-2-carboxylate + nicotinamide + 3 H2O + H(+). It functions in the pathway cofactor biosynthesis; thiamine diphosphate biosynthesis. Involved in the biosynthesis of the thiazole moiety of thiamine. Catalyzes the conversion of NAD and glycine to adenosine diphosphate 5-(2-hydroxyethyl)-4-methylthiazole-2-carboxylate (ADT), an adenylated thiazole intermediate, using free sulfide as a source of sulfur. The polypeptide is Thiamine thiazole synthase (Fervidobacterium nodosum (strain ATCC 35602 / DSM 5306 / Rt17-B1)).